Consider the following 617-residue polypeptide: Cell pattern formation-associated protein STUA (617 aa).

Positions 1–79 are disordered; sequence MNQPAADMYY…PASQMGQNVL (79 aa). Residues 24 to 34 show a composition bias toward polar residues; it reads TVTSGAMSYHS. Residues 45–58 show a composition bias toward low complexity; it reads PQYAPQPQYSQYGY. Positions 61–76 are enriched in polar residues; it reads GLTSPQSAQPASQMGQ. The HTH APSES-type domain maps to 106–212; the sequence is RVTATLWEDE…HNIGALLYHP (107 aa). Positions 140–161 form a DNA-binding region, H-T-H motif; sequence GTKLLNVAGMTRGRRDGILKSE. 3 disordered regions span residues 223-274, 300-451, and 463-617; these read AAAE…MGRP, SDSG…DSGA, and APAV…PRRR. Low complexity-rich tracts occupy residues 305–318 and 334–345; these read QWAQGQGMGSAQGA and PATPASTPPGTT. Polar residues-rich tracts occupy residues 346–361 and 368–382; these read IQNMQSYQSGAQQYDN and PSAQQSPYQATNPAS. Residues 438 to 447 show a composition bias toward basic and acidic residues; it reads EHDHDAEYTH. Low complexity predominate over residues 488-509; that stretch reads PASGRATPRTAAAPQPYYSQQA. Composition is skewed to polar residues over residues 519–533 and 553–563; these read QQPSSNLYNVMSNDR and SMSNGYASQMN. The tract at residues 569-593 is nuclear localization domain; the sequence is KRGRDEDDDLQRPSSGGGMDLKRRK. Residues 599 to 617 show a composition bias toward low complexity; that stretch reads QVPAMAYAPPVMAQQPRRR.

The protein belongs to the EFG1/PHD1/stuA family.

The protein localises to the nucleus. Its function is as follows. Transcription factor that regulates asexual reproduction. Binds the StuA-response elements (StRE) with the consensus sequence 5'-(A/T)CGCG(T/A)N(A/C)-3' at the promoters of target genes. Required for the formation of aerial hyphae, efficient conidiation, and the formation of perithecia. Essential for the generation of normal turgor pressure within the appressorium. Required for infection of intact apple fruit and penetration of onion epidermal cells. This chain is Cell pattern formation-associated protein STUA, found in Colletotrichum gloeosporioides (Anthracnose fungus).